Consider the following 159-residue polypeptide: 2-C-methyl-D-erythritol 2,4-cyclodiphosphate synthase (159 aa).

A divalent metal cation contacts are provided by Asp-8 and His-10. Residues 8 to 10 (DVH) and 34 to 35 (HS) each bind 4-CDP-2-C-methyl-D-erythritol 2-phosphate. Residue His-42 participates in a divalent metal cation binding. 4-CDP-2-C-methyl-D-erythritol 2-phosphate contacts are provided by residues 56–58 (DIG), 61–65 (FPDTD), 100–106 (AQAPKML), 132–135 (TTTE), Phe-139, and Arg-142.

This sequence belongs to the IspF family. In terms of assembly, homotrimer. It depends on a divalent metal cation as a cofactor.

The catalysed reaction is 4-CDP-2-C-methyl-D-erythritol 2-phosphate = 2-C-methyl-D-erythritol 2,4-cyclic diphosphate + CMP. The protein operates within isoprenoid biosynthesis; isopentenyl diphosphate biosynthesis via DXP pathway; isopentenyl diphosphate from 1-deoxy-D-xylulose 5-phosphate: step 4/6. In terms of biological role, involved in the biosynthesis of isopentenyl diphosphate (IPP) and dimethylallyl diphosphate (DMAPP), two major building blocks of isoprenoid compounds. Catalyzes the conversion of 4-diphosphocytidyl-2-C-methyl-D-erythritol 2-phosphate (CDP-ME2P) to 2-C-methyl-D-erythritol 2,4-cyclodiphosphate (ME-CPP) with a corresponding release of cytidine 5-monophosphate (CMP). The chain is 2-C-methyl-D-erythritol 2,4-cyclodiphosphate synthase from Salmonella dublin (strain CT_02021853).